The chain runs to 486 residues: Ribulose bisphosphate carboxylase large chain 1 (486 aa).

Substrate contacts are provided by Asn125 and Thr175. The active-site Proton acceptor is the Lys177. Lys179 provides a ligand contact to substrate. The Mg(2+) site is built by Lys203, Asp205, and Glu206. Lys203 is modified (N6-carboxylysine). His295 (proton acceptor) is an active-site residue. The substrate site is built by Arg296, His328, and Ser380.

It belongs to the RuBisCO large chain family. Type I subfamily. In terms of assembly, heterohexadecamer of 8 large chains and 8 small chains. Mg(2+) is required as a cofactor.

It catalyses the reaction 2 (2R)-3-phosphoglycerate + 2 H(+) = D-ribulose 1,5-bisphosphate + CO2 + H2O. It carries out the reaction D-ribulose 1,5-bisphosphate + O2 = 2-phosphoglycolate + (2R)-3-phosphoglycerate + 2 H(+). In terms of biological role, ruBisCO catalyzes two reactions: the carboxylation of D-ribulose 1,5-bisphosphate, the primary event in carbon dioxide fixation, as well as the oxidative fragmentation of the pentose substrate. Both reactions occur simultaneously and in competition at the same active site. This chain is Ribulose bisphosphate carboxylase large chain 1, found in Bradyrhizobium sp. (strain ORS 278).